A 159-amino-acid polypeptide reads, in one-letter code: Small ribosomal subunit protein uS9 (159 aa).

The protein belongs to the universal ribosomal protein uS9 family.

This is Small ribosomal subunit protein uS9 from Beijerinckia indica subsp. indica (strain ATCC 9039 / DSM 1715 / NCIMB 8712).